A 469-amino-acid chain; its full sequence is 3-isopropylmalate dehydratase large subunit (469 aa).

The [4Fe-4S] cluster site is built by Cys-349, Cys-410, and Cys-413.

This sequence belongs to the aconitase/IPM isomerase family. LeuC type 1 subfamily. In terms of assembly, heterodimer of LeuC and LeuD. Requires [4Fe-4S] cluster as cofactor.

The enzyme catalyses (2R,3S)-3-isopropylmalate = (2S)-2-isopropylmalate. The protein operates within amino-acid biosynthesis; L-leucine biosynthesis; L-leucine from 3-methyl-2-oxobutanoate: step 2/4. Its function is as follows. Catalyzes the isomerization between 2-isopropylmalate and 3-isopropylmalate, via the formation of 2-isopropylmaleate. In Neisseria meningitidis serogroup A / serotype 4A (strain DSM 15465 / Z2491), this protein is 3-isopropylmalate dehydratase large subunit.